The primary structure comprises 223 residues: Transmembrane protein 114 (223 aa).

A helical membrane pass occupies residues 7–27 (GLAGAAALTGALSFVLLAAAI). Residues asparagine 55 and asparagine 89 are each glycosylated (N-linked (GlcNAc...) asparagine). Transmembrane regions (helical) follow at residues 106–126 (FVIL…TGFL), 134–154 (LLLL…LAGI), and 189–209 (LALG…FLAA).

The protein belongs to the PMP-22/EMP/MP20 family.

It localises to the cell junction. Its subcellular location is the tight junction. It is found in the lateral cell membrane. The protein localises to the apical cell membrane. This chain is Transmembrane protein 114, found in Homo sapiens (Human).